The following is a 226-amino-acid chain: PKHD-type hydroxylase PputW619_4316 (226 aa).

The 101-residue stretch at 78–178 (KVFPPLINCY…RYAAFFWTQS (101 aa)) folds into the Fe2OG dioxygenase domain. Positions 96, 98, and 159 each coordinate Fe cation. Arg169 contacts 2-oxoglutarate.

It depends on Fe(2+) as a cofactor. The cofactor is L-ascorbate.

The chain is PKHD-type hydroxylase PputW619_4316 from Pseudomonas putida (strain W619).